The primary structure comprises 221 residues: Iron-sulfur cluster repair protein YtfE (221 aa).

This sequence belongs to the RIC family. YtfE subfamily. As to quaternary structure, homodimer.

The protein localises to the cytoplasm. Functionally, di-iron-containing protein involved in the repair of iron-sulfur clusters damaged by oxidative and nitrosative stress conditions. The sequence is that of Iron-sulfur cluster repair protein YtfE from Yersinia pestis bv. Antiqua (strain Antiqua).